Reading from the N-terminus, the 501-residue chain is Splicing factor ESS-2 homolog (501 aa).

Composition is skewed to low complexity over residues M1–G18 and I105–R115. 2 disordered regions span residues M1 to L20 and I105 to T163. A compositionally biased stretch (polar residues) spans T126–D151. The span at G152–T163 shows a compositional bias: basic and acidic residues. S409 and S411 each carry phosphoserine. Residues R425 to P471 are disordered.

The protein belongs to the ESS2 family.

It localises to the nucleus. The chain is Splicing factor ESS-2 homolog (Es2) from Drosophila melanogaster (Fruit fly).